We begin with the raw amino-acid sequence, 64 residues long: U9-ctenitoxin-Pr1a (64 aa).

Disulfide bonds link Cys3–Cys15, Cys9–Cys24, Cys14–Cys47, Cys34–Cys55, and Cys49–Cys61.

Expressed by the venom gland.

The protein localises to the secreted. Its function is as follows. Non-toxic to mice and insects. This is U9-ctenitoxin-Pr1a from Phoneutria reidyi (Brazilian Amazonian armed spider).